The chain runs to 212 residues: MKGKFIVIEGIDGCGKTTQIDELSKWLPNSGLIKKGSKLITTREPGGSLLGKKLRGLILDNNKNNKPSSLAELLLYSADRAEHVSKIISPALNNNDWVISDRFSDSTLAYQGYGRNINLEIIKNIESIVCQGASPDLTFFLEISPEESIFRRKNEIPDRIESEGIRFLEKVNEGFKLIAKQKNWKVISASQNIQTISNQIKETLLNNFSNNK.

10–17 (GIDGCGKT) provides a ligand contact to ATP.

The protein belongs to the thymidylate kinase family.

It catalyses the reaction dTMP + ATP = dTDP + ADP. Functionally, phosphorylation of dTMP to form dTDP in both de novo and salvage pathways of dTTP synthesis. The sequence is that of Thymidylate kinase from Prochlorococcus marinus (strain AS9601).